The sequence spans 411 residues: MSVGCACPGCSSKSFKLYSPKEPPNGNAFPPFHPGTMLDRDVGPTPMYPPTYLEPGIGRHTPYGNQTDYRIFELNKRLQNWTEECDNLWWDAFTTEFFEDDAMLTITFCLEDGPKRYTIGRTLIPRYFRSIFEGGATELYYVLKHPKEAFHSNFVSLDCDQGSMVTQHGKPMFTQVCVEGRLYLEFMFDDMMRIKTWHFSIRQHRELIPRSILAMHAQDPQMLDQLSKNITRCGLSNSTLNYLRLCVILEPMQELMSRHKTYSLSPRDCLKTCLFQKWQRMVAPPAEPTRQQPSKRRKRKMSGGSTMSSGGGNTNNSNSKKKSPASTFALSSQVPDVMVVGEPTLMGGEFGDEDERLITRLENTQFDAANGIDDEDSFNNSPALGANSPWNSKPPSSQESKSENPTSQASQ.

Serine 2 is modified (N-acetylserine). Threonine 61 carries the post-translational modification Phosphothreonine. Phosphoserine occurs at positions 265 and 302. 2 disordered regions span residues 283–330 (APPA…TFAL) and 367–411 (DAAN…QASQ). Low complexity predominate over residues 302–318 (SGGSTMSSGGGNTNNSN). The 40-residue stretch at 336–375 (DVMVVGEPTLMGGEFGDEDERLITRLENTQFDAANGIDDE) folds into the LIM interaction domain (LID) domain.

The protein belongs to the LDB family. In terms of assembly, interacts with ESR1. Forms homodimers and heterodimers. Interacts with and activates LHX1/LIM1. Interacts with the LIM domains of ISL1 and LMO2. Can assemble in a complex with LMO2 and TAL1/SCL but does not interact with TAL1/SCL directly. Strongly interacts with the LIM2 domain of LMX1A and more weakly with the LIM1 domain. Homodimerization is not required for, and does not effect, LMX1A-binding. Component of a nuclear TAL-1 complex composed at least of CBFA2T3, LDB1, TAL1 and TCF3. Interacts with LHX6 and LHX9. At neuronal promoters, forms a complex with LHX3 involved in the specification of interneurons, in motor neurons, it is displaced by ISL1 to form a ternary complex in which ISL1 contacts both LHX3 and LDB1. Interacts with SLK; leading to negatively regulate SLK kinase activity. Interacts with YWHAZ. Interacts with PRDM1/BLIMP1. Interacts with LMO4. Interacts with RLIM/RNF12; the interaction inhibits the ubiquitination of LMO proteins. Post-translationally, ubiquitinated by RLIM/RNF12, leading to its degradation by the proteasome. Expressed in a wide range of adult tissues including brain, heart, skeletal muscle, colon, thymus, spleen, kidney, liver, small intestine, lung and peripheral blood leukocytes.

It localises to the nucleus. Its function is as follows. Binds to the LIM domain of a wide variety of LIM domain-containing transcription factors. May regulate the transcriptional activity of LIM-containing proteins by determining specific partner interactions. Plays a role in the development of interneurons and motor neurons in cooperation with LHX3 and ISL1. Acts synergistically with LHX1/LIM1 in axis formation and activation of gene expression. Acts with LMO2 in the regulation of red blood cell development, maintaining erythroid precursors in an immature state. The chain is LIM domain-binding protein 1 (LDB1) from Homo sapiens (Human).